Consider the following 401-residue polypeptide: Argininosuccinate synthase (401 aa).

Ala-8 to Ser-16 contributes to the ATP binding site. Tyr-85 lines the L-citrulline pocket. Gly-115 is a binding site for ATP. The L-aspartate site is built by Thr-117, Asn-121, and Asp-122. Asn-121 is an L-citrulline binding site. L-citrulline is bound by residues Arg-125, Ser-173, Glu-258, and Tyr-270.

Belongs to the argininosuccinate synthase family. Type 1 subfamily. Homotetramer.

It localises to the cytoplasm. It carries out the reaction L-citrulline + L-aspartate + ATP = 2-(N(omega)-L-arginino)succinate + AMP + diphosphate + H(+). The protein operates within amino-acid biosynthesis; L-arginine biosynthesis; L-arginine from L-ornithine and carbamoyl phosphate: step 2/3. This is Argininosuccinate synthase from Staphylococcus aureus (strain bovine RF122 / ET3-1).